A 250-amino-acid chain; its full sequence is Leucyl/phenylalanyl-tRNA--protein transferase (250 aa).

It belongs to the L/F-transferase family.

The protein localises to the cytoplasm. The catalysed reaction is N-terminal L-lysyl-[protein] + L-leucyl-tRNA(Leu) = N-terminal L-leucyl-L-lysyl-[protein] + tRNA(Leu) + H(+). The enzyme catalyses N-terminal L-arginyl-[protein] + L-leucyl-tRNA(Leu) = N-terminal L-leucyl-L-arginyl-[protein] + tRNA(Leu) + H(+). It catalyses the reaction L-phenylalanyl-tRNA(Phe) + an N-terminal L-alpha-aminoacyl-[protein] = an N-terminal L-phenylalanyl-L-alpha-aminoacyl-[protein] + tRNA(Phe). Functions in the N-end rule pathway of protein degradation where it conjugates Leu, Phe and, less efficiently, Met from aminoacyl-tRNAs to the N-termini of proteins containing an N-terminal arginine or lysine. This chain is Leucyl/phenylalanyl-tRNA--protein transferase, found in Cupriavidus pinatubonensis (strain JMP 134 / LMG 1197) (Cupriavidus necator (strain JMP 134)).